A 344-amino-acid chain; its full sequence is N-acetyl-gamma-glutamyl-phosphate reductase (344 aa).

The active site involves cysteine 149.

Belongs to the NAGSA dehydrogenase family. Type 1 subfamily.

It is found in the cytoplasm. The catalysed reaction is N-acetyl-L-glutamate 5-semialdehyde + phosphate + NADP(+) = N-acetyl-L-glutamyl 5-phosphate + NADPH + H(+). It functions in the pathway amino-acid biosynthesis; L-arginine biosynthesis; N(2)-acetyl-L-ornithine from L-glutamate: step 3/4. Its function is as follows. Catalyzes the NADPH-dependent reduction of N-acetyl-5-glutamyl phosphate to yield N-acetyl-L-glutamate 5-semialdehyde. This is N-acetyl-gamma-glutamyl-phosphate reductase from Thermoanaerobacter pseudethanolicus (strain ATCC 33223 / 39E) (Clostridium thermohydrosulfuricum).